A 339-amino-acid chain; its full sequence is Glycerol-3-phosphate dehydrogenase [NAD(P)+] (339 aa).

NADPH is bound by residues Ser-11, Trp-12, and Lys-109. Sn-glycerol 3-phosphate is bound by residues Lys-109, Gly-140, and Ser-142. Ala-144 is an NADPH binding site. Residues Lys-195, Asp-249, Ser-259, Arg-260, and Asn-261 each contribute to the sn-glycerol 3-phosphate site. The Proton acceptor role is filled by Lys-195. Arg-260 is a binding site for NADPH. The NADPH site is built by Val-284 and Glu-286.

Belongs to the NAD-dependent glycerol-3-phosphate dehydrogenase family.

It is found in the cytoplasm. The catalysed reaction is sn-glycerol 3-phosphate + NAD(+) = dihydroxyacetone phosphate + NADH + H(+). It catalyses the reaction sn-glycerol 3-phosphate + NADP(+) = dihydroxyacetone phosphate + NADPH + H(+). The protein operates within membrane lipid metabolism; glycerophospholipid metabolism. Functionally, catalyzes the reduction of the glycolytic intermediate dihydroxyacetone phosphate (DHAP) to sn-glycerol 3-phosphate (G3P), the key precursor for phospholipid synthesis. The sequence is that of Glycerol-3-phosphate dehydrogenase [NAD(P)+] from Lactobacillus johnsonii (strain CNCM I-12250 / La1 / NCC 533).